The following is a 49-amino-acid chain: Lectin alpha chain (49 aa).

This sequence belongs to the leguminous lectin family. In terms of assembly, homotetramer. Post-translationally, the beta and gamma chains are produced by partial proteolytic processing of the lectin alpha chain by an asparaginyl endopeptidase. Mixture of 60% alpha lectin and 40% of its beta and gamma proteolytic fragments. Seed.

Its function is as follows. D-mannose/D-glucose-binding lectin. This chain is Lectin alpha chain, found in Dioclea violacea.